We begin with the raw amino-acid sequence, 540 residues long: Transcription initiation factor IIF subunit alpha (540 aa).

Residues 1 to 26 (MDSQETKVFENVKQENPDEKKPKVEE) show a composition bias toward basic and acidic residues. Disordered stretches follow at residues 1-39 (MDSQ…QSQQ) and 70-106 (IDPS…SSSN). Composition is skewed to polar residues over residues 29 to 39 (SQNNASTQSQQ) and 89 to 106 (APSS…SSSN). A phosphoserine mark is found at Ser259 and Ser261. Positions 280 to 382 (MEGNEEDNKK…REEKLKSRFS (103 aa)) form a coiled coil. The interval 341–416 (YESDEEDEDP…SSQLQSPNTS (76 aa)) is disordered. Residues 359-369 (SEEEVLQEEEE) show a composition bias toward acidic residues. The span at 381–416 (FSANASKTNTPRPLERTPSSVSPVKASSQLQSPNTS) shows a compositional bias: polar residues. Residue Ser399 is modified to Phosphoserine.

The protein belongs to the TFIIF alpha subunit family. As to quaternary structure, component of the fcp1/TFIIF/polII complex via interaction of tfg3 with both tfg1/TFIIF-alpha and tfg2/TFIIF-beta subunits.

The protein localises to the nucleus. In terms of biological role, TFIIF is a general transcription initiation factor that binds to RNA polymerase II and helps to recruit it to the initiation complex in collaboration with TFIIB. It promotes transcription elongation. The chain is Transcription initiation factor IIF subunit alpha (tfg1) from Schizosaccharomyces pombe (strain 972 / ATCC 24843) (Fission yeast).